We begin with the raw amino-acid sequence, 248 residues long: MADPNNPITEPKAIIQSSTSSSVTIVPVPTCGDSLSDSATCENPCPLDTITTTTTTVCFAAPSSTASGNDINTLMATDTDISRRKKNPVYRGIRCRSGKWVSEIREPKKTTRVWLGTYPTPEMAAAAYDVAALALKGGDTLLNFPDSLGSYPIPLSSSAAHIRCAAAAAAATRGAAGAAVKVGQKKEDKVYDTAESSTMGFVDEEELLNMPGLLADMAKGMMVAPPWMGSPPSDDSPENSDGESLWSY.

The segment at residues 89–145 is a DNA-binding region (AP2/ERF); that stretch reads VYRGIRCRSGKWVSEIREPKKTTRVWLGTYPTPEMAAAAYDVAALALKGGDTLLNFP. Positions 225 to 248 are disordered; it reads PPWMGSPPSDDSPENSDGESLWSY.

Belongs to the AP2/ERF transcription factor family. ERF subfamily.

The protein localises to the nucleus. Probably acts as a transcriptional activator. Binds to the GCC-box pathogenesis-related promoter element. May be involved in the regulation of gene expression by stress factors and by components of stress signal transduction pathways. This is Ethylene-responsive transcription factor ERF026 (ERF026) from Arabidopsis thaliana (Mouse-ear cress).